A 387-amino-acid chain; its full sequence is Phosphoglycerate kinase (387 aa).

Substrate-binding positions include 21-23 (DLN), Arg36, 59-62 (HLGR), Arg113, and Arg146. ATP contacts are provided by residues Lys197, Glu314, and 340-343 (GGDT).

The protein belongs to the phosphoglycerate kinase family. As to quaternary structure, monomer.

It is found in the cytoplasm. It catalyses the reaction (2R)-3-phosphoglycerate + ATP = (2R)-3-phospho-glyceroyl phosphate + ADP. The protein operates within carbohydrate degradation; glycolysis; pyruvate from D-glyceraldehyde 3-phosphate: step 2/5. This chain is Phosphoglycerate kinase, found in Marinomonas sp. (strain MWYL1).